Reading from the N-terminus, the 111-residue chain is Cytochrome c (111 aa).

A1 bears the N-acetylalanine mark. Heme c-binding residues include C22, C25, and H26. K80 carries the N6,N6,N6-trimethyllysine modification. A heme c-binding site is contributed by M88. K94 carries the N6,N6,N6-trimethyllysine modification.

It belongs to the cytochrome c family. Post-translationally, binds 1 heme c group covalently per subunit.

The protein localises to the mitochondrion intermembrane space. Its function is as follows. Electron carrier protein. The oxidized form of the cytochrome c heme group can accept an electron from the heme group of the cytochrome c1 subunit of cytochrome reductase. Cytochrome c then transfers this electron to the cytochrome oxidase complex, the final protein carrier in the mitochondrial electron-transport chain. In Vigna radiata var. radiata (Mung bean), this protein is Cytochrome c.